Consider the following 354-residue polypeptide: Glutamine synthetase (354 aa).

Positions 22–101 constitute a GS beta-grasp domain; the sequence is IQAEYVWVDG…VLAETYNSDG (80 aa). Residues 108-354 enclose the GS catalytic domain; that stretch reads FRHHAAKVME…IIVETTLLNA (247 aa).

This sequence belongs to the glutamine synthetase family. Homooctamer.

The protein resides in the cytoplasm. It catalyses the reaction L-glutamate + NH4(+) + ATP = L-glutamine + ADP + phosphate + H(+). This chain is Glutamine synthetase (GLN1), found in Hebeloma cylindrosporum.